The following is a 226-amino-acid chain: Peptidyl-prolyl cis-trans isomerase CYP23 (226 aa).

A signal peptide spans 1–22 (MGITRNLILGLACLAFVSIAKA). The PPIase cyclophilin-type domain maps to 34 to 191 (VVFQTSYGDI…ERITILSTYY (158 aa)).

The protein belongs to the cyclophilin-type PPIase family. In terms of tissue distribution, ubiquitous. Lower expression in roots.

The protein resides in the endoplasmic reticulum. The enzyme catalyses [protein]-peptidylproline (omega=180) = [protein]-peptidylproline (omega=0). Functionally, PPIases accelerate the folding of proteins. It catalyzes the cis-trans isomerization of proline imidic peptide bonds in oligopeptides. The polypeptide is Peptidyl-prolyl cis-trans isomerase CYP23 (CYP23) (Arabidopsis thaliana (Mouse-ear cress)).